Consider the following 333-residue polypeptide: Succinylglutamate desuccinylase (333 aa).

Residues His56, Glu59, and His149 each contribute to the Zn(2+) site. Residue Glu214 is part of the active site.

This sequence belongs to the AspA/AstE family. Succinylglutamate desuccinylase subfamily. Zn(2+) is required as a cofactor.

It catalyses the reaction N-succinyl-L-glutamate + H2O = L-glutamate + succinate. It participates in amino-acid degradation; L-arginine degradation via AST pathway; L-glutamate and succinate from L-arginine: step 5/5. Functionally, transforms N(2)-succinylglutamate into succinate and glutamate. This Chromobacterium violaceum (strain ATCC 12472 / DSM 30191 / JCM 1249 / CCUG 213 / NBRC 12614 / NCIMB 9131 / NCTC 9757 / MK) protein is Succinylglutamate desuccinylase.